Consider the following 338-residue polypeptide: UDP-3-O-acylglucosamine N-acyltransferase (338 aa).

The active-site Proton acceptor is the His239.

This sequence belongs to the transferase hexapeptide repeat family. LpxD subfamily. Homotrimer.

The enzyme catalyses a UDP-3-O-[(3R)-3-hydroxyacyl]-alpha-D-glucosamine + a (3R)-hydroxyacyl-[ACP] = a UDP-2-N,3-O-bis[(3R)-3-hydroxyacyl]-alpha-D-glucosamine + holo-[ACP] + H(+). The protein operates within bacterial outer membrane biogenesis; LPS lipid A biosynthesis. Catalyzes the N-acylation of UDP-3-O-acylglucosamine using 3-hydroxyacyl-ACP as the acyl donor. Is involved in the biosynthesis of lipid A, a phosphorylated glycolipid that anchors the lipopolysaccharide to the outer membrane of the cell. This is UDP-3-O-acylglucosamine N-acyltransferase from Xylella fastidiosa (strain M23).